Reading from the N-terminus, the 149-residue chain is Transcription antitermination protein NusB (149 aa).

This sequence belongs to the NusB family.

Functionally, involved in transcription antitermination. Required for transcription of ribosomal RNA (rRNA) genes. Binds specifically to the boxA antiterminator sequence of the ribosomal RNA (rrn) operons. This Chromobacterium violaceum (strain ATCC 12472 / DSM 30191 / JCM 1249 / CCUG 213 / NBRC 12614 / NCIMB 9131 / NCTC 9757 / MK) protein is Transcription antitermination protein NusB.